A 360-amino-acid polypeptide reads, in one-letter code: DNA ADP-ribosyl glycohydrolase (360 aa).

The region spanning 1 to 155 (MLRFVRGNLL…VYEPVENPKA (155 aa)) is the Macro domain. Residues 8–9 (NL), 20–22 (TVN), 31–34 (VALQ), and T79 each bind ADP-D-ribose. Catalysis depends on K80, which acts as the Nucleophile. An ADP-D-ribose-binding site is contributed by 117 to 121 (GAGNG). The interaction with DarT stretch occupies residues 167–338 (LTPARAALLK…VALDALLKRG (172 aa)).

This sequence belongs to the DarG ADP-ribosyl glycohydrolase family. As to quaternary structure, interacts (via C-terminus) with cognate toxin DarT; this heterodimeric complex neutralizes the toxic effect of DarT by preventing ssDNA binding to DarT and consequently inactivating the toxin by direct protein-protein interactions.

It carries out the reaction an N-(ADP-alpha-D-ribosyl)-thymidine in DNA + H2O = a thymidine in DNA + ADP-D-ribose. In terms of biological role, antitoxin component of the hybrid type II/IV toxin-antitoxin (TA) system DarTG, which plays a crucial role in controlling bacterial growth and bacteriophage infection. De-ADP-ribosylates DNA modified on thymidine by its cognate toxin DarT, which neutralizes the activity of cognate toxin DarT. Upon expression in E.coli neutralizes the effect of cognate toxin DarT. Upon expression in M.tuberculosis neutralizes the toxic effects of endogenous DarT. This is DNA ADP-ribosyl glycohydrolase from Thermus aquaticus (strain ATCC BAA-2747 / Y51MC23).